Consider the following 249-residue polypeptide: Chitooligosaccharide deacetylase (249 aa).

Mg(2+) is bound by residues H61 and H125.

It belongs to the YdjC deacetylase family. ChbG subfamily. In terms of assembly, homodimer. Requires Mg(2+) as cofactor.

Its subcellular location is the cytoplasm. The catalysed reaction is N,N'-diacetylchitobiose + H2O = N-acetyl-beta-D-glucosaminyl-(1-&gt;4)-D-glucosamine + acetate. The enzyme catalyses diacetylchitobiose-6'-phosphate + H2O = N'-monoacetylchitobiose-6'-phosphate + acetate. It functions in the pathway glycan degradation; chitin degradation. Functionally, involved in the degradation of chitin. ChbG is essential for growth on the acetylated chitooligosaccharides chitobiose and chitotriose but is dispensable for growth on cellobiose and chitosan dimer, the deacetylated form of chitobiose. Deacetylation of chitobiose-6-P and chitotriose-6-P is necessary for both the activation of the chb promoter by the regulatory protein ChbR and the hydrolysis of phosphorylated beta-glucosides by the phospho-beta-glucosidase ChbF. Catalyzes the removal of only one acetyl group from chitobiose-6-P to yield monoacetylchitobiose-6-P, the inducer of ChbR and the substrate of ChbF. The sequence is that of Chitooligosaccharide deacetylase from Escherichia coli O17:K52:H18 (strain UMN026 / ExPEC).